Here is a 372-residue protein sequence, read N- to C-terminus: Glutamate 5-kinase (372 aa).

Lys14 serves as a coordination point for ATP. Substrate is bound by residues Ser54, Asp141, and Asn153. 173–174 (TD) contacts ATP. Positions 280–358 (RGHVVIDAGA…GEIETVLGYM (79 aa)) constitute a PUA domain.

This sequence belongs to the glutamate 5-kinase family.

The protein resides in the cytoplasm. It catalyses the reaction L-glutamate + ATP = L-glutamyl 5-phosphate + ADP. It participates in amino-acid biosynthesis; L-proline biosynthesis; L-glutamate 5-semialdehyde from L-glutamate: step 1/2. Functionally, catalyzes the transfer of a phosphate group to glutamate to form L-glutamate 5-phosphate. This Burkholderia mallei (strain NCTC 10229) protein is Glutamate 5-kinase.